The following is a 436-amino-acid chain: AMSH-like protease (436 aa).

At methionine 1 the chain carries N-acetylmethionine. Residues serine 25 and serine 242 each carry the phosphoserine modification. The MPN domain occupies 269–397; it reads VVLPEDLCHK…IFRLTNAGML (129 aa). Residues histidine 347, histidine 349, aspartate 360, histidine 362, cysteine 402, histidine 408, and histidine 410 each contribute to the Zn(2+) site. Positions 347-360 match the JAMM motif motif; it reads HTHPTQTAFLSSVD.

It belongs to the peptidase M67C family. Requires Zn(2+) as cofactor. Ubiquitously expressed.

Its activity is regulated as follows. Inhibited by UbV(SP.1), an ubiquitin variant that also inhibits STAMBP. In terms of biological role, zinc metalloprotease that specifically cleaves 'Lys-63'-linked polyubiquitin chains. Acts as a positive regulator of the TORC1 signaling pathway by mediating 'Lys-63'-linked deubiquitination of SESN2, thereby inhibiting SESN2-interaction with the GATOR2 complex. Does not cleave 'Lys-48'-linked polyubiquitin chains. The protein is AMSH-like protease of Homo sapiens (Human).